The following is a 179-amino-acid chain: Translation initiation factor IF-3 (179 aa).

It belongs to the IF-3 family. In terms of assembly, monomer.

The protein localises to the cytoplasm. Functionally, IF-3 binds to the 30S ribosomal subunit and shifts the equilibrium between 70S ribosomes and their 50S and 30S subunits in favor of the free subunits, thus enhancing the availability of 30S subunits on which protein synthesis initiation begins. This Proteus hauseri protein is Translation initiation factor IF-3.